The chain runs to 1454 residues: Coiled-coil domain-containing protein 18 (1454 aa).

Residue serine 45 is modified to Phosphoserine. Coiled-coil stretches lie at residues 107–138, 170–402, 438–464, and 508–1309; these read APVD…HSLM, ILEE…ISQL, KLVI…NLTA, and TMNK…SGHE. Residues 828 to 851 are disordered; it reads QKQRESSAEKLRKMEEKCESAAHE. Residue serine 1355 is modified to Phosphoserine.

Its subcellular location is the cytoplasm. The protein localises to the cytoskeleton. The protein resides in the microtubule organizing center. It localises to the centrosome. It is found in the centriolar satellite. The sequence is that of Coiled-coil domain-containing protein 18 (CCDC18) from Homo sapiens (Human).